Here is a 422-residue protein sequence, read N- to C-terminus: Succinate--CoA ligase [ADP-forming] subunit beta, mitochondrial (422 aa).

Residues 1–27 (MVRGSLGKLASRALSVAGKWQHQQLRR) constitute a mitochondrion transit peptide. The 244-residue stretch at 36 to 279 (AELMGKYGIN…TTQEDPREVA (244 aa)) folds into the ATP-grasp domain. Residues Lys75, 82–84 (GRG), and Glu142 contribute to the ATP site. Residues Asn234 and Asp248 each coordinate Mg(2+). Residues Asn299 and 356 to 358 (GIM) contribute to the substrate site.

This sequence belongs to the succinate/malate CoA ligase beta subunit family. In terms of assembly, heterodimer of an alpha and a beta subunit. Mg(2+) is required as a cofactor.

The protein localises to the mitochondrion. It catalyses the reaction succinate + ATP + CoA = succinyl-CoA + ADP + phosphate. It functions in the pathway carbohydrate metabolism; tricarboxylic acid cycle; succinate from succinyl-CoA (ligase route): step 1/1. In terms of biological role, succinyl-CoA synthetase functions in the citric acid cycle (TCA), coupling the hydrolysis of succinyl-CoA to the synthesis of ATP and thus represents the only step of substrate-level phosphorylation in the TCA. The beta subunit provides nucleotide specificity of the enzyme and binds the substrate succinate, while the binding sites for coenzyme A and phosphate are found in the alpha subunit. This Oryza sativa subsp. japonica (Rice) protein is Succinate--CoA ligase [ADP-forming] subunit beta, mitochondrial.